The primary structure comprises 206 residues: LexA repressor (206 aa).

A DNA-binding region (H-T-H motif) is located at residues 28–48 (VREIGEAVGLASSSTVHGHLA). Residues serine 128 and lysine 166 each act as for autocatalytic cleavage activity in the active site.

The protein belongs to the peptidase S24 family. Homodimer.

It catalyses the reaction Hydrolysis of Ala-|-Gly bond in repressor LexA.. In terms of biological role, represses a number of genes involved in the response to DNA damage (SOS response), including recA and lexA. In the presence of single-stranded DNA, RecA interacts with LexA causing an autocatalytic cleavage which disrupts the DNA-binding part of LexA, leading to derepression of the SOS regulon and eventually DNA repair. This is LexA repressor from Bacillus pumilus (strain SAFR-032).